Reading from the N-terminus, the 1098-residue chain is Beta-alanine-activating enzyme (1098 aa).

Residues 198-206 (TSGTTGIPK), Asp-428, Arg-442, and Lys-527 each bind ATP. The 78-residue stretch at 553 to 630 (EDLWEKLQYL…EIYNHILQTV (78 aa)) folds into the Carrier domain. Ser-589 is modified (O-(pantetheine 4'-phosphoryl)serine). Phosphoserine occurs at positions 649 and 724.

This sequence belongs to the ATP-dependent AMP-binding enzyme family. Ubiquitously expressed in adult tissues.

Functionally, covalently binds beta-alanine in an ATP-dependent manner to form a thioester bond with its phosphopantetheine group and transfers it to an, as yet, unknown acceptor. May be required for a post-translational protein modification or for post-transcriptional modification of an RNA. In Homo sapiens (Human), this protein is Beta-alanine-activating enzyme (AASDH).